Reading from the N-terminus, the 349-residue chain is Beta-hexosaminidase (349 aa).

Substrate is bound by residues aspartate 64, arginine 72, arginine 138, and 168 to 169 (KH). The active-site Proton donor/acceptor is the histidine 181. Residue aspartate 252 is the Nucleophile of the active site.

Belongs to the glycosyl hydrolase 3 family. NagZ subfamily.

It localises to the cytoplasm. The catalysed reaction is Hydrolysis of terminal non-reducing N-acetyl-D-hexosamine residues in N-acetyl-beta-D-hexosaminides.. It participates in cell wall biogenesis; peptidoglycan recycling. In terms of biological role, plays a role in peptidoglycan recycling by cleaving the terminal beta-1,4-linked N-acetylglucosamine (GlcNAc) from peptide-linked peptidoglycan fragments, giving rise to free GlcNAc, anhydro-N-acetylmuramic acid and anhydro-N-acetylmuramic acid-linked peptides. This Methylobacillus flagellatus (strain ATCC 51484 / DSM 6875 / VKM B-1610 / KT) protein is Beta-hexosaminidase.